A 415-amino-acid chain; its full sequence is Zona pellucida-like domain-containing protein 1 (415 aa).

The first 19 residues, 1 to 19, serve as a signal peptide directing secretion; it reads MERVWLLFLLAIRVSPGSA. Residues 20–373 lie on the Extracellular side of the membrane; sequence QFNSYNCDAN…PFQLNAVTSS (354 aa). Residues 43–320 form the ZP domain; the sequence is YCGVQAITMK…PICGNRKRRD (278 aa). Disulfide bonds link C44–C155 and C79–C104. Residue N164 is glycosylated (N-linked (GlcNAc...) asparagine). 2 cysteine pairs are disulfide-bonded: C235-C296 and C255-C313. The helical transmembrane segment at 374 to 394 threads the bilayer; the sequence is LISGMVILGVLCFSLLLCSLA. The Cytoplasmic segment spans residues 395–415; the sequence is LLHRKGSTSLVLNGVRNPVFE.

Proteolytically cleaved before the transmembrane segment to yield the secreted form found in the extracellular matrix of the cupula.

The protein resides in the cytoplasmic vesicle membrane. Its subcellular location is the secreted. It localises to the extracellular space. The protein localises to the extracellular matrix. Functionally, glycoprotein which is a component of the gelatinous extracellular matrix in the cupulae of the vestibular organ. This Mus musculus (Mouse) protein is Zona pellucida-like domain-containing protein 1 (Zpld1).